Here is a 198-residue protein sequence, read N- to C-terminus: Glycerol-3-phosphate acyltransferase (198 aa).

3 helical membrane-spanning segments follow: residues 5–25 (AVIL…GYLI), 114–134 (VLIM…IAVL), and 154–176 (AFAL…LVAV).

The protein belongs to the PlsY family. In terms of assembly, probably interacts with PlsX.

Its subcellular location is the cell membrane. It catalyses the reaction an acyl phosphate + sn-glycerol 3-phosphate = a 1-acyl-sn-glycero-3-phosphate + phosphate. It participates in lipid metabolism; phospholipid metabolism. Catalyzes the transfer of an acyl group from acyl-phosphate (acyl-PO(4)) to glycerol-3-phosphate (G3P) to form lysophosphatidic acid (LPA). This enzyme utilizes acyl-phosphate as fatty acyl donor, but not acyl-CoA or acyl-ACP. The sequence is that of Glycerol-3-phosphate acyltransferase from Desulforudis audaxviator (strain MP104C).